Here is a 258-residue protein sequence, read N- to C-terminus: Imidazole glycerol phosphate synthase subunit HisF (258 aa).

Active-site residues include D11 and D130.

It belongs to the HisA/HisF family. Heterodimer of HisH and HisF.

Its subcellular location is the cytoplasm. The catalysed reaction is 5-[(5-phospho-1-deoxy-D-ribulos-1-ylimino)methylamino]-1-(5-phospho-beta-D-ribosyl)imidazole-4-carboxamide + L-glutamine = D-erythro-1-(imidazol-4-yl)glycerol 3-phosphate + 5-amino-1-(5-phospho-beta-D-ribosyl)imidazole-4-carboxamide + L-glutamate + H(+). The protein operates within amino-acid biosynthesis; L-histidine biosynthesis; L-histidine from 5-phospho-alpha-D-ribose 1-diphosphate: step 5/9. Its function is as follows. IGPS catalyzes the conversion of PRFAR and glutamine to IGP, AICAR and glutamate. The HisF subunit catalyzes the cyclization activity that produces IGP and AICAR from PRFAR using the ammonia provided by the HisH subunit. The protein is Imidazole glycerol phosphate synthase subunit HisF of Yersinia enterocolitica serotype O:8 / biotype 1B (strain NCTC 13174 / 8081).